The chain runs to 345 residues: 4-hydroxythreonine-4-phosphate dehydrogenase (345 aa).

Substrate contacts are provided by H148 and T149. A divalent metal cation-binding residues include H182, H227, and H282. Substrate is bound by residues K290, N299, and R308.

It belongs to the PdxA family. In terms of assembly, homodimer. It depends on Zn(2+) as a cofactor. Mg(2+) serves as cofactor. The cofactor is Co(2+).

The protein localises to the cytoplasm. It catalyses the reaction 4-(phosphooxy)-L-threonine + NAD(+) = 3-amino-2-oxopropyl phosphate + CO2 + NADH. The protein operates within cofactor biosynthesis; pyridoxine 5'-phosphate biosynthesis; pyridoxine 5'-phosphate from D-erythrose 4-phosphate: step 4/5. Its function is as follows. Catalyzes the NAD(P)-dependent oxidation of 4-(phosphooxy)-L-threonine (HTP) into 2-amino-3-oxo-4-(phosphooxy)butyric acid which spontaneously decarboxylates to form 3-amino-2-oxopropyl phosphate (AHAP). The chain is 4-hydroxythreonine-4-phosphate dehydrogenase from Bradyrhizobium diazoefficiens (strain JCM 10833 / BCRC 13528 / IAM 13628 / NBRC 14792 / USDA 110).